Reading from the N-terminus, the 217-residue chain is Trichothecene biosynthesis transcription regulator TRI6 (217 aa).

Residues 185 to 215 form a C2H2-type zinc finger; it reads VRCPWHDQEGQQCLRVFSRVDNMRDHYRRIH.

The protein localises to the nucleus. Its function is as follows. Transcriptional activator of part of the core trichothecene biosynthesis cluster. The protein is Trichothecene biosynthesis transcription regulator TRI6 of Fusarium sporotrichioides.